We begin with the raw amino-acid sequence, 816 residues long: Acyl-homoserine lactone acylase QuiP (816 aa).

A signal peptide spans 1 to 33 (MASPALSHFLPRFGVAAAVAGVLSLTGCQTWNA). The Nucleophile role is filled by Ser262.

Belongs to the peptidase S45 family. In terms of assembly, heterodimer of an alpha subunit and a beta subunit processed from the same precursor.

The protein localises to the periplasm. It carries out the reaction an N-acyl-L-homoserine lactone + H2O = L-homoserine lactone + a carboxylate. In terms of biological role, catalyzes the deacylation of acyl-homoserine lactone (AHL or acyl-HSL), releasing homoserine lactone (HSL) and the corresponding fatty acid. Possesses a specificity for the degradation of long-chain acyl-HSLs (side chains of seven or more carbons in length). The polypeptide is Acyl-homoserine lactone acylase QuiP (quiP) (Pseudomonas fluorescens (strain Pf0-1)).